A 298-amino-acid chain; its full sequence is tRNA pseudouridine synthase B (298 aa).

Asp39 (nucleophile) is an active-site residue.

It belongs to the pseudouridine synthase TruB family. Type 1 subfamily.

It carries out the reaction uridine(55) in tRNA = pseudouridine(55) in tRNA. In terms of biological role, responsible for synthesis of pseudouridine from uracil-55 in the psi GC loop of transfer RNAs. This is tRNA pseudouridine synthase B from Oenococcus oeni (strain ATCC BAA-331 / PSU-1).